Consider the following 459-residue polypeptide: Elongation factor 1-alpha (459 aa).

Glycine 2 is subject to N,N,N-trimethylglycine. An N6,N6-dimethyllysine; alternate modification is found at lysine 3. Position 3 is an N6-methyllysine; alternate (lysine 3). The region spanning 5 to 239 (KSHINVVVIG…DAIDPPSRPT (235 aa)) is the tr-type G domain. Residues 14-21 (GHVDSGKS) form a G1 region. Residue 14 to 21 (GHVDSGKS) coordinates GTP. The residue at position 30 (lysine 30) is an N6-methyllysine. Residues 70–74 (GITID) form a G2 region. Position 79 is an N6,N6,N6-trimethyllysine (lysine 79). A G3 region spans residues 91–94 (DAPG). Residues 91–95 (DAPGH) and 153–156 (NKMD) contribute to the GTP site. A G4 region spans residues 153–156 (NKMD). The G5 stretch occupies residues 192 to 194 (SGF). Lysine 315 bears the N6,N6-dimethyllysine; alternate mark. An N6-methyllysine; alternate modification is found at lysine 315. Lysine 389 bears the N6-methyllysine mark.

This sequence belongs to the TRAFAC class translation factor GTPase superfamily. Classic translation factor GTPase family. EF-Tu/EF-1A subfamily.

The protein localises to the cytoplasm. Its function is as follows. This protein promotes the GTP-dependent binding of aminoacyl-tRNA to the A-site of ribosomes during protein biosynthesis. The polypeptide is Elongation factor 1-alpha (TEF1) (Aureobasidium pullulans (Black yeast)).